The chain runs to 331 residues: Putative phosphoribosylaminoimidazole-succinocarboxamide synthase (331 aa).

The protein belongs to the SAICAR synthetase family. Highly divergent.

The catalysed reaction is 5-amino-1-(5-phospho-D-ribosyl)imidazole-4-carboxylate + L-aspartate + ATP = (2S)-2-[5-amino-1-(5-phospho-beta-D-ribosyl)imidazole-4-carboxamido]succinate + ADP + phosphate + 2 H(+). Its pathway is purine metabolism; IMP biosynthesis via de novo pathway; 5-amino-1-(5-phospho-D-ribosyl)imidazole-4-carboxamide from 5-amino-1-(5-phospho-D-ribosyl)imidazole-4-carboxylate: step 1/2. This is Putative phosphoribosylaminoimidazole-succinocarboxamide synthase (purC) from Archaeoglobus fulgidus (strain ATCC 49558 / DSM 4304 / JCM 9628 / NBRC 100126 / VC-16).